Reading from the N-terminus, the 318-residue chain is Acetyl-coenzyme A carboxylase carboxyl transferase subunit alpha (318 aa).

The CoA carboxyltransferase C-terminal domain occupies 34 to 295 (SIEEEITKLR…KATIKQQLAQ (262 aa)).

The protein belongs to the AccA family. In terms of assembly, acetyl-CoA carboxylase is a heterohexamer composed of biotin carboxyl carrier protein (AccB), biotin carboxylase (AccC) and two subunits each of ACCase subunit alpha (AccA) and ACCase subunit beta (AccD).

Its subcellular location is the cytoplasm. The enzyme catalyses N(6)-carboxybiotinyl-L-lysyl-[protein] + acetyl-CoA = N(6)-biotinyl-L-lysyl-[protein] + malonyl-CoA. Its pathway is lipid metabolism; malonyl-CoA biosynthesis; malonyl-CoA from acetyl-CoA: step 1/1. Its function is as follows. Component of the acetyl coenzyme A carboxylase (ACC) complex. First, biotin carboxylase catalyzes the carboxylation of biotin on its carrier protein (BCCP) and then the CO(2) group is transferred by the carboxyltransferase to acetyl-CoA to form malonyl-CoA. This chain is Acetyl-coenzyme A carboxylase carboxyl transferase subunit alpha, found in Pseudoalteromonas atlantica (strain T6c / ATCC BAA-1087).